Consider the following 123-residue polypeptide: Large ribosomal subunit protein uL14c (123 aa).

The protein belongs to the universal ribosomal protein uL14 family. Part of the 50S ribosomal subunit.

It is found in the plastid. Its subcellular location is the chloroplast. In terms of biological role, binds to 23S rRNA. The polypeptide is Large ribosomal subunit protein uL14c (Lolium perenne (Perennial ryegrass)).